The sequence spans 136 residues: Holo-[acyl-carrier-protein] synthase (136 aa).

Mg(2+)-binding residues include Asp8 and Glu58.

Belongs to the P-Pant transferase superfamily. AcpS family. Mg(2+) serves as cofactor.

It is found in the cytoplasm. It carries out the reaction apo-[ACP] + CoA = holo-[ACP] + adenosine 3',5'-bisphosphate + H(+). Functionally, transfers the 4'-phosphopantetheine moiety from coenzyme A to a Ser of acyl-carrier-protein. The protein is Holo-[acyl-carrier-protein] synthase of Leuconostoc mesenteroides subsp. mesenteroides (strain ATCC 8293 / DSM 20343 / BCRC 11652 / CCM 1803 / JCM 6124 / NCDO 523 / NBRC 100496 / NCIMB 8023 / NCTC 12954 / NRRL B-1118 / 37Y).